The following is a 605-amino-acid chain: Hepatocyte nuclear factor 1-alpha-A (605 aa).

Residues 1–31 (MASQLSYLQRELLQALLESGVTKEALKKALA) form a dimerization region. The 32-residue stretch at 1–32 (MASQLSYLQRELLQALLESGVTKEALKKALAD) folds into the HNF-p1 domain. A disordered region spans residues 57–81 (QLPNGLGESHISEDESSDDGEDFTP). In terms of domain architecture, POU-specific atypical spans 85-180 (KELERLSPEE…IARLFTFTEF (96 aa)). Interaction with DNA stretches follow at residues 128-130 (QRE), 141-147 (HLSQHLN), 153-156 (KTQK), 206-209 (RFKW), 266-268 (RVY), and 273-276 (NRRK). The Nuclear localization signal motif lies at 200–208 (KKMRRNRFK). Positions 202 to 282 (MRRNRFKWGP…NRRKEEAFRH (81 aa)) form a DNA-binding region, homeobox; HNF1-type. Residues 321–335 (DRSAVMANSQSTPSP) are compositionally biased toward polar residues. Residues 321-343 (DRSAVMANSQSTPSPSALEPSHS) form a disordered region. The not present in other members of the HNF1 family stretch occupies residues 448-453 (PSHQLH).

The protein belongs to the HNF1 homeobox family. In terms of assembly, binds DNA as dimer. Forms a homodimer or heterodimer with HNF1-alpha-B. Potentially also form a heterodimer with HNF1-beta. Protein expressed in liver, stomach, small intestine, colon and kidney. Not expressed in spleen, lung, blood, heart muscle, skeletal muscle, testis and brain.

It is found in the nucleus. Transcriptional activator that regulates the tissue specific expression of multiple genes, especially in pancreas and liver. Binds to the hepatocyte specific promoter element HP1. Binds to the inverted palindrome 5'-GTTAATNATTAAC-3'. This is Hepatocyte nuclear factor 1-alpha-A (hnf1a-a) from Xenopus laevis (African clawed frog).